The sequence spans 193 residues: Probable GTP-binding protein EngB (193 aa).

In terms of domain architecture, EngB-type G spans 24–193 (NIPEIALAGR…ELKAALAELL (170 aa)). Residues 32–39 (GRSNVGKS), 59–63 (GKTRT), 77–80 (DLPG), 144–147 (TKAD), and 174–176 (FSA) contribute to the GTP site. Mg(2+) is bound by residues serine 39 and threonine 61.

The protein belongs to the TRAFAC class TrmE-Era-EngA-EngB-Septin-like GTPase superfamily. EngB GTPase family. Requires Mg(2+) as cofactor.

In terms of biological role, necessary for normal cell division and for the maintenance of normal septation. The chain is Probable GTP-binding protein EngB from Syntrophomonas wolfei subsp. wolfei (strain DSM 2245B / Goettingen).